Consider the following 339-residue polypeptide: Vomeronasal type-1 receptor A14 (339 aa).

Topologically, residues 1–42 (MMGVQICQGMMSEIPFFSPPPQFSYMMNKNIRLHTDSNIRNT) are extracellular. A helical membrane pass occupies residues 43-63 (FFTDIGIGISANSLLLLFNIF). The Cytoplasmic segment spans residues 64–75 (KLTRGQRSRLTD). Residues 76 to 96 (LPIGLLSLINLLMLLMAAFIA) traverse the membrane as a helical segment. Over 97 to 119 (TDTFISWKGWDDIICKFLVYLYR) the chain is Extracellular. Cys111 and Cys198 are disulfide-bonded. Residues 120–140 (TFRGLSLCTSCLLSVLQAIIL) traverse the membrane as a helical segment. At 141-160 (SPRSSCLAKFKHKPPHHISC) the chain is on the cytoplasmic side. A helical membrane pass occupies residues 161-181 (AILSLSVLYMFIGSHLLVSII). Over 182 to 213 (ATPNLTTNDFIHVTQSCSILPMSYLMQCMFST) the chain is Extracellular. The N-linked (GlcNAc...) asparagine glycan is linked to Asn185. A helical transmembrane segment spans residues 214 to 234 (LLAIRDVFLISLMVLSTWYMV). Topologically, residues 235–264 (ALLCRHRKQTRHLQGTSLSPKASPEQRATR) are cytoplasmic. Residues 265–285 (SILMLMSLFVLMSVFDSIVCS) traverse the membrane as a helical segment. The Extracellular portion of the chain corresponds to 286–296 (SRTMYLNDPIS). Residues 297 to 317 (YSIQLFMVHIYATVSPFVFIV) form a helical membrane-spanning segment. Topologically, residues 318–339 (TEKHIVNFLRSVCEGDECLNIH) are cytoplasmic.

It belongs to the G-protein coupled receptor 1 family.

It is found in the cell membrane. In terms of biological role, putative pheromone receptor implicated in the regulation of social as well as reproductive behavior. The polypeptide is Vomeronasal type-1 receptor A14 (Rattus norvegicus (Rat)).